A 110-amino-acid polypeptide reads, in one-letter code: Small ribosomal subunit protein uS17 (110 aa).

Belongs to the universal ribosomal protein uS17 family. In terms of assembly, part of the 30S ribosomal subunit.

Its function is as follows. One of the primary rRNA binding proteins, it binds specifically to the 5'-end of 16S ribosomal RNA. The polypeptide is Small ribosomal subunit protein uS17 (Haloquadratum walsbyi (strain DSM 16790 / HBSQ001)).